The chain runs to 223 residues: uncharacterized protein (223 aa).

This is an uncharacterized protein from Acanthamoeba polyphaga (Amoeba).